We begin with the raw amino-acid sequence, 419 residues long: Peptide chain release factor subunit 1 (419 aa).

Belongs to the eukaryotic release factor 1 family. In terms of assembly, heterodimer of two subunits, one of which binds GTP.

The protein resides in the cytoplasm. Functionally, directs the termination of nascent peptide synthesis (translation) in response to the termination codons UAA, UAG and UGA. The polypeptide is Peptide chain release factor subunit 1 (Methanococcus maripaludis (strain C7 / ATCC BAA-1331)).